The following is a 423-amino-acid chain: Probable electron transfer flavoprotein-quinone oxidoreductase YgcN (423 aa).

7-21 serves as a coordination point for FAD; sequence IIIIGAGIAGTACAL.

It belongs to the ETF-QO/FixC family. The cofactor is FAD.

Its function is as follows. Probably accepts electrons from YgcQ/YgcR and reduces a quinone. The polypeptide is Probable electron transfer flavoprotein-quinone oxidoreductase YgcN (ygcN) (Escherichia coli (strain K12)).